We begin with the raw amino-acid sequence, 272 residues long: Thiazole synthase (272 aa).

K111 functions as the Schiff-base intermediate with DXP in the catalytic mechanism. 1-deoxy-D-xylulose 5-phosphate contacts are provided by residues G172, 198 to 199 (AG), and 220 to 221 (NS). The segment at 249–272 (SGRLPRRDQASASSPTTGLVQSPQ) is disordered. Over residues 258-272 (ASASSPTTGLVQSPQ) the composition is skewed to polar residues.

This sequence belongs to the ThiG family. As to quaternary structure, homotetramer. Forms heterodimers with either ThiH or ThiS.

It localises to the cytoplasm. It carries out the reaction [ThiS sulfur-carrier protein]-C-terminal-Gly-aminoethanethioate + 2-iminoacetate + 1-deoxy-D-xylulose 5-phosphate = [ThiS sulfur-carrier protein]-C-terminal Gly-Gly + 2-[(2R,5Z)-2-carboxy-4-methylthiazol-5(2H)-ylidene]ethyl phosphate + 2 H2O + H(+). It functions in the pathway cofactor biosynthesis; thiamine diphosphate biosynthesis. Functionally, catalyzes the rearrangement of 1-deoxy-D-xylulose 5-phosphate (DXP) to produce the thiazole phosphate moiety of thiamine. Sulfur is provided by the thiocarboxylate moiety of the carrier protein ThiS. In vitro, sulfur can be provided by H(2)S. In Synechococcus sp. (strain CC9605), this protein is Thiazole synthase.